The chain runs to 207 residues: LexA repressor (207 aa).

The segment at residues 28–48 is a DNA-binding region (H-T-H motif); the sequence is VREIGEAVGLASSSTVHGHLA. Catalysis depends on for autocatalytic cleavage activity residues serine 129 and lysine 167.

It belongs to the peptidase S24 family. As to quaternary structure, homodimer.

The catalysed reaction is Hydrolysis of Ala-|-Gly bond in repressor LexA.. Its function is as follows. Represses a number of genes involved in the response to DNA damage (SOS response), including recA and lexA. In the presence of single-stranded DNA, RecA interacts with LexA causing an autocatalytic cleavage which disrupts the DNA-binding part of LexA, leading to derepression of the SOS regulon and eventually DNA repair. The sequence is that of LexA repressor from Brevibacillus brevis (strain 47 / JCM 6285 / NBRC 100599).